Consider the following 87-residue polypeptide: U3-theraphotoxin-Hhn1n (87 aa).

A signal peptide spans 1-24 (MVNMKASMFLTFAGLVLLFVVCYA). Residues 25–52 (SESEEKEFPKEMLSSIFAVDNDFKQEER) constitute a propeptide that is removed on maturation. Disulfide bonds link C54–C67, C61–C72, and C66–C79.

This sequence belongs to the neurotoxin 10 (Hwtx-1) family. 51 (Hntx-8) subfamily. Hntx-8 sub-subfamily. Expressed by the venom gland.

It is found in the secreted. Weakly inhibits Kv11.1/KCNH2/ERG1, Kv1.2/KCNA2, Kv1.3/KCNA3, and Kv2.1/KCNB1. In Cyriopagopus hainanus (Chinese bird spider), this protein is U3-theraphotoxin-Hhn1n.